The chain runs to 196 residues: Pantothenic acid transporter PanT (196 aa).

6 helical membrane passes run 10-30 (AILA…QFVI), 35-55 (FPVK…ILGW), 58-78 (GAFL…IVTT), 99-119 (WGLF…YFVY), 131-151 (AAFA…FLFF), and 161-181 (YLLG…AVIL).

In terms of assembly, in E.coli forms a stable energy-coupling factor (ECF) transporter complex composed of 2 membrane-embedded substrate-binding protein (S component), 2 ATP-binding proteins (A and A' components) and 2 transmembrane proteins (T component), probably with a stoichiometry of 2:1:1:2. May be able to interact with more than 1 S component at a time.

It is found in the cell membrane. Its function is as follows. Probably a pantothenic acid-binding protein that interacts with the energy-coupling factor (ECF) ABC-transporter complex. Unlike classic ABC transporters this ECF transporter provides the energy necessary to transport a number of different substrates. The substrates themselves are bound by transmembrane, not extracytoplasmic soluble proteins. In Lactococcus lactis subsp. cremoris (strain MG1363), this protein is Pantothenic acid transporter PanT (panT).